Reading from the N-terminus, the 603-residue chain is Polypeptide N-acetylgalactosaminyltransferase 10 (603 aa).

The Cytoplasmic portion of the chain corresponds to 1–11 (MRRKEKRLLQA). Residues 12–31 (VALALAALVLLPNVGLWALY) form a helical; Signal-anchor for type II membrane protein membrane-spanning segment. The Lumenal segment spans residues 32 to 603 (RERQPDGSPG…STVLENFNRN (572 aa)). N-linked (GlcNAc...) asparagine glycans are attached at residues Asn-124 and Asn-146. Intrachain disulfides connect Cys-135–Cys-365, Cys-356–Cys-432, Cys-471–Cys-488, Cys-523–Cys-538, and Cys-563–Cys-578. Residues 144–253 (LPNTSIIIPF…VNWLPPLLDR (110 aa)) form a catalytic subdomain A region. Residues Asp-185 and Arg-214 each contribute to the substrate site. Asp-237 serves as a coordination point for Mn(2+). Substrate is bound at residue Ser-238. His-239 contacts Mn(2+). Residues 311–373 (PFESPVMAGG…PCSRVGHIYR (63 aa)) are catalytic subdomain B. Trp-342 contacts substrate. A Mn(2+)-binding site is contributed by His-370. Residues Arg-373 and Tyr-378 each contribute to the substrate site. Positions 373 to 384 (RKYVPYKVPAGV) are flexible loop. The Ricin B-type lectin domain maps to 458–590 (AAWGEIRNVG…SSLTQQWLFE (133 aa)). Asn-593 carries N-linked (GlcNAc...) asparagine glycosylation.

This sequence belongs to the glycosyltransferase 2 family. GalNAc-T subfamily. Mn(2+) is required as a cofactor. Highly expressed in the sublingual gland, testis, small intestine, colon and ovary. Expressed at intermediate level in heart, brain, spleen, lung, stomach, cervix and uterus.

Its subcellular location is the golgi apparatus membrane. It carries out the reaction L-seryl-[protein] + UDP-N-acetyl-alpha-D-galactosamine = a 3-O-[N-acetyl-alpha-D-galactosaminyl]-L-seryl-[protein] + UDP + H(+). The catalysed reaction is L-threonyl-[protein] + UDP-N-acetyl-alpha-D-galactosamine = a 3-O-[N-acetyl-alpha-D-galactosaminyl]-L-threonyl-[protein] + UDP + H(+). Its pathway is protein modification; protein glycosylation. Catalyzes the initial reaction in O-linked oligosaccharide biosynthesis, the transfer of an N-acetyl-D-galactosamine residue to a serine or threonine residue on the protein receptor. Has activity toward Muc5Ac and EA2 peptide substrates. The protein is Polypeptide N-acetylgalactosaminyltransferase 10 (Galnt10) of Rattus norvegicus (Rat).